We begin with the raw amino-acid sequence, 317 residues long: Melanocyte-stimulating hormone receptor (317 aa).

Residues 1-37 (MPVLGSQRRLLGSLNCTPPATFSLTLAPNRTGPQCLE) are Extracellular-facing. Residue asparagine 29 is glycosylated (N-linked (GlcNAc...) asparagine). Residues 38 to 63 (VSIPDGLFLSLGLVSLVENVLVVAAI) form a helical membrane-spanning segment. Over 64 to 72 (AKNRNLHSP) the chain is Cytoplasmic. The chain crosses the membrane as a helical span at residues 73–93 (MYYFICCLAVSDLLVSVSNVL). Residues 94–118 (ETAVMLLLEAGALAARAAVVQQLDN) lie on the Extracellular side of the membrane. A helical membrane pass occupies residues 119-140 (VIDVLICGSMVSSLCFLGAIAM). The Cytoplasmic segment spans residues 141–163 (DRYISIFYALRYHSVVTLPRAWR). A helical membrane pass occupies residues 164-183 (IIAAIWVASILTSLLFITYY). Residues 184–191 (NHTVVLLC) lie on the Extracellular side of the membrane. The helical transmembrane segment at 192 to 211 (LVGFFIAMLALMAILYVHML) threads the bilayer. Residues 212 to 240 (ARACQHARDIARLQKRQHPIHQGFGLKGA) lie on the Cytoplasmic side of the membrane. A helical transmembrane segment spans residues 241-266 (ATLTILLGVFFLCWGPFFLHLSLIVL). Topologically, residues 267–279 (CPQHPTCGCIFKN) are extracellular. A helical membrane pass occupies residues 280–300 (FNLFLALIICNAIVDPLIYAF). At 301-317 (RSQELRKTLQEVLQCSW) the chain is on the cytoplasmic side. Cysteine 315 carries S-palmitoyl cysteine lipidation.

It belongs to the G-protein coupled receptor 1 family. In terms of assembly, interacts with MGRN1, but does not undergo MGRN1-mediated ubiquitination; this interaction competes with GNAS-binding and thus inhibits agonist-induced cAMP production. Interacts with OPN3; the interaction results in a decrease in MC1R-mediated cAMP signaling and ultimately a decrease in melanin production in melanocytes.

The protein localises to the cell membrane. Receptor for MSH (alpha, beta and gamma) and ACTH. The activity of this receptor is mediated by G proteins which activate adenylate cyclase. Mediates melanogenesis, the production of eumelanin (black/brown) and phaeomelanin (red/yellow), via regulation of cAMP signaling in melanocytes. This Alces alces alces (European moose) protein is Melanocyte-stimulating hormone receptor (MC1R).